Here is a 463-residue protein sequence, read N- to C-terminus: A-type ATP synthase subunit B (463 aa).

The protein belongs to the ATPase alpha/beta chains family. In terms of assembly, has multiple subunits with at least A(3), B(3), C, D, E, F, H, I and proteolipid K(x).

The protein resides in the cell membrane. Functionally, component of the A-type ATP synthase that produces ATP from ADP in the presence of a proton gradient across the membrane. The B chain is a regulatory subunit. The chain is A-type ATP synthase subunit B from Thermococcus sp. (strain KI).